A 315-amino-acid polypeptide reads, in one-letter code: Ribosomal RNA small subunit methyltransferase H (315 aa).

Positions 1–21 are disordered; it reads MNVVNVVPMHLPPPPPRPRGE. S-adenosyl-L-methionine contacts are provided by residues 51–53, D69, F96, D117, and Q124; that span reads GGH. A disordered region spans residues 281–315; the sequence is KKPVTAGDDEVEGNPRARSAKLRAARRVGGAEALA.

The protein belongs to the methyltransferase superfamily. RsmH family.

The protein resides in the cytoplasm. It carries out the reaction cytidine(1402) in 16S rRNA + S-adenosyl-L-methionine = N(4)-methylcytidine(1402) in 16S rRNA + S-adenosyl-L-homocysteine + H(+). In terms of biological role, specifically methylates the N4 position of cytidine in position 1402 (C1402) of 16S rRNA. The sequence is that of Ribosomal RNA small subunit methyltransferase H from Sorangium cellulosum (strain So ce56) (Polyangium cellulosum (strain So ce56)).